The following is a 530-amino-acid chain: Bifunctional purine biosynthesis protein PurH (530 aa).

The MGS-like domain occupies 1–148; that stretch reads MNNARPIHRA…KNHKDVAIVV (148 aa).

The protein belongs to the PurH family.

The catalysed reaction is (6R)-10-formyltetrahydrofolate + 5-amino-1-(5-phospho-beta-D-ribosyl)imidazole-4-carboxamide = 5-formamido-1-(5-phospho-D-ribosyl)imidazole-4-carboxamide + (6S)-5,6,7,8-tetrahydrofolate. The enzyme catalyses IMP + H2O = 5-formamido-1-(5-phospho-D-ribosyl)imidazole-4-carboxamide. Its pathway is purine metabolism; IMP biosynthesis via de novo pathway; 5-formamido-1-(5-phospho-D-ribosyl)imidazole-4-carboxamide from 5-amino-1-(5-phospho-D-ribosyl)imidazole-4-carboxamide (10-formyl THF route): step 1/1. It participates in purine metabolism; IMP biosynthesis via de novo pathway; IMP from 5-formamido-1-(5-phospho-D-ribosyl)imidazole-4-carboxamide: step 1/1. The chain is Bifunctional purine biosynthesis protein PurH from Vibrio cholerae serotype O1 (strain M66-2).